Here is a 276-residue protein sequence, read N- to C-terminus: 4-chlorobenzoyl coenzyme A dehalogenase-2 (276 aa).

Residue 66–71 (AGFDLE) participates in substrate binding. His93 serves as the catalytic Proton acceptor. Gly117 serves as a coordination point for substrate. The active-site Nucleophile is the Asp148. A substrate-binding site is contributed by Arg261.

This sequence belongs to the enoyl-CoA hydratase/isomerase family. As to quaternary structure, homotetramer.

It catalyses the reaction 4-chlorobenzoyl-CoA + H2O = 4-hydroxybenzoyl-CoA + chloride + H(+). Its pathway is xenobiotic degradation; 4-chlorobenzoate degradation; 4-hydroxybenzoate from 4-chlorobenzoate: step 2/3. In terms of biological role, dehalogenates 4-chlorobenzoyl-CoA, 4-iodobenzoyl-CoA, 4-bromobenzoyl-CoA and, at a slower rate, 4-fluorobenzoyl-CoA. Does not dehalogenate 2-chlorobenzoyl-CoA or 3-chlorobenzoyl-CoA. The polypeptide is 4-chlorobenzoyl coenzyme A dehalogenase-2 (Arthrobacter sp).